Consider the following 338-residue polypeptide: Ketol-acid reductoisomerase (NADP(+)) (338 aa).

Residues 1 to 181 (MKIYYDKDCN…GGGRAGIIET (181 aa)) enclose the KARI N-terminal Rossmann domain. NADP(+) contacts are provided by residues 24-27 (YGSQ), K47, S50, S52, and 82-85 (DEIQ). Residue H107 is part of the active site. Residue G133 participates in NADP(+) binding. Positions 182-327 (SFKEETETDL…ARLRSMMSWI (146 aa)) constitute a KARI C-terminal knotted domain. Positions 190, 194, 226, and 230 each coordinate Mg(2+). Substrate is bound at residue S251.

The protein belongs to the ketol-acid reductoisomerase family. Mg(2+) serves as cofactor.

It catalyses the reaction (2R)-2,3-dihydroxy-3-methylbutanoate + NADP(+) = (2S)-2-acetolactate + NADPH + H(+). It carries out the reaction (2R,3R)-2,3-dihydroxy-3-methylpentanoate + NADP(+) = (S)-2-ethyl-2-hydroxy-3-oxobutanoate + NADPH + H(+). It functions in the pathway amino-acid biosynthesis; L-isoleucine biosynthesis; L-isoleucine from 2-oxobutanoate: step 2/4. Its pathway is amino-acid biosynthesis; L-valine biosynthesis; L-valine from pyruvate: step 2/4. Involved in the biosynthesis of branched-chain amino acids (BCAA). Catalyzes an alkyl-migration followed by a ketol-acid reduction of (S)-2-acetolactate (S2AL) to yield (R)-2,3-dihydroxy-isovalerate. In the isomerase reaction, S2AL is rearranged via a Mg-dependent methyl migration to produce 3-hydroxy-3-methyl-2-ketobutyrate (HMKB). In the reductase reaction, this 2-ketoacid undergoes a metal-dependent reduction by NADPH to yield (R)-2,3-dihydroxy-isovalerate. In Geobacter sulfurreducens (strain ATCC 51573 / DSM 12127 / PCA), this protein is Ketol-acid reductoisomerase (NADP(+)).